The chain runs to 348 residues: Phenylalanine--tRNA ligase alpha subunit (348 aa).

Mg(2+) is bound at residue glutamate 259.

This sequence belongs to the class-II aminoacyl-tRNA synthetase family. Phe-tRNA synthetase alpha subunit type 1 subfamily. As to quaternary structure, tetramer of two alpha and two beta subunits. It depends on Mg(2+) as a cofactor.

The protein resides in the cytoplasm. The catalysed reaction is tRNA(Phe) + L-phenylalanine + ATP = L-phenylalanyl-tRNA(Phe) + AMP + diphosphate + H(+). This Lacticaseibacillus paracasei (strain ATCC 334 / BCRC 17002 / CCUG 31169 / CIP 107868 / KCTC 3260 / NRRL B-441) (Lactobacillus paracasei) protein is Phenylalanine--tRNA ligase alpha subunit.